A 133-amino-acid chain; its full sequence is C-C motif chemokine 21b (133 aa).

Positions 1–23 are cleaved as a signal peptide; it reads MAQMMTLSLLSLVLALCIPWTQG. 3 disulfides stabilise this stretch: Cys-31–Cys-57, Cys-32–Cys-75, and Cys-103–Cys-122. The tract at residues 87–133 is disordered; sequence MRRLDQPPAPGKQSPGCRKNRGTSKSGKKGKGSKGCKRTEQTQPSRG. Positions 98-133 are C-terminal basic extension; it reads KQSPGCRKNRGTSKSGKKGKGSKGCKRTEQTQPSRG. Positions 104–122 are enriched in basic residues; the sequence is RKNRGTSKSGKKGKGSKGC.

The protein belongs to the intercrine beta (chemokine CC) family. In terms of assembly, binds to CCR7 and to CXCR3. Interacts with PDPN; relocalizes PDPN to the basolateral membrane. Interacts with GPR174. As to expression, expressed strongly in lung, spleen, thymus, peripheral and mesentric lymph nodes. Also expressed in the testis, kidney, liver, and heart.

The protein localises to the secreted. Functionally, inhibits hemopoiesis and stimulates chemotaxis. Chemotactic in vitro for thymocytes and activated T-cells, but not for B-cells, macrophages, or neutrophils. Potent mesangial cell chemoattractant. Shows preferential activity towards naive T-cells. May play a role in mediating homing of lymphocytes to secondary lymphoid organs. The chain is C-C motif chemokine 21b (Ccl21b) from Mus musculus (Mouse).